A 531-amino-acid polypeptide reads, in one-letter code: T-complex protein 1 subunit zeta (531 aa).

An N-acetylalanine modification is found at Ala2. An N6-acetyllysine modification is found at Lys5. ADP is bound at residue Gly39. Gly39 provides a ligand contact to ATP. Asp90 lines the Mg(2+) pocket. 6 residues coordinate ADP: Gly91, Thr92, Thr93, Ser94, Thr158, and Lys159. Residues Gly91, Thr92, and Thr93 each contribute to the ATP site. At Lys199 the chain carries N6-acetyllysine. Ser205 bears the Phosphoserine mark. Residue Lys251 forms a Glycyl lysine isopeptide (Lys-Gly) (interchain with G-Cter in SUMO2) linkage. 4 positions are modified to N6-acetyllysine: Lys287, Lys365, Lys377, and Lys388. Ala411 is a binding site for ADP. Positions 411, 412, 496, and 501 each coordinate ATP. Position 496 (Asp496) interacts with ADP.

The protein belongs to the TCP-1 chaperonin family. As to quaternary structure, component of the chaperonin-containing T-complex (TRiC), a hexadecamer composed of two identical back-to-back stacked rings enclosing a protein folding chamber. Each ring is made up of eight different subunits: TCP1/CCT1, CCT2, CCT3, CCT4, CCT5, CCT6A/CCT6, CCT7, CCT8. Interacts with PACRG.

The protein localises to the cytoplasm. The catalysed reaction is ATP + H2O = ADP + phosphate + H(+). In terms of biological role, component of the chaperonin-containing T-complex (TRiC), a molecular chaperone complex that assists the folding of actin, tubulin and other proteins upon ATP hydrolysis. The TRiC complex mediates the folding of WRAP53/TCAB1, thereby regulating telomere maintenance. In Oryctolagus cuniculus (Rabbit), this protein is T-complex protein 1 subunit zeta (CCT6).